The sequence spans 153 residues: Nucleoside diphosphate kinase (153 aa).

Lysine 11, phenylalanine 59, arginine 87, threonine 93, arginine 104, and asparagine 114 together coordinate ATP. Catalysis depends on histidine 117, which acts as the Pros-phosphohistidine intermediate.

The protein belongs to the NDK family. The cofactor is Mg(2+).

It catalyses the reaction a 2'-deoxyribonucleoside 5'-diphosphate + ATP = a 2'-deoxyribonucleoside 5'-triphosphate + ADP. The enzyme catalyses a ribonucleoside 5'-diphosphate + ATP = a ribonucleoside 5'-triphosphate + ADP. In terms of biological role, major role in the synthesis of nucleoside triphosphates other than ATP. The ATP gamma phosphate is transferred to the NDP beta phosphate via a ping-pong mechanism, using a phosphorylated active-site intermediate. The chain is Nucleoside diphosphate kinase (swoH) from Emericella nidulans (strain FGSC A4 / ATCC 38163 / CBS 112.46 / NRRL 194 / M139) (Aspergillus nidulans).